Consider the following 224-residue polypeptide: Cytidylate kinase (224 aa).

Residue 13–21 coordinates ATP; it reads GPSASGKGT.

Belongs to the cytidylate kinase family. Type 1 subfamily.

The protein resides in the cytoplasm. It catalyses the reaction CMP + ATP = CDP + ADP. The enzyme catalyses dCMP + ATP = dCDP + ADP. In Nitrosomonas eutropha (strain DSM 101675 / C91 / Nm57), this protein is Cytidylate kinase.